A 702-amino-acid polypeptide reads, in one-letter code: Cytolytic toxin-beta (702 aa).

The segment at Pro2–Ser264 is structural MACPF/CDC pore-forming domain. 3 N-linked (GlcNAc...) asparagine glycosylation sites follow: Asn94, Asn101, and Asn286. The structural FAT domain stretch occupies residues Thr265–Val387. Residues Val388–Gln515 form a thioredoxin (THX) domain region. The region spanning Ser504 to Glu702 is the B30.2/SPRY domain.

The protein belongs to the SNTX/VTX toxin family. As to quaternary structure, heterodimer of alpha and beta subunits; non-covalently linked. Also associates into tetramers or even higher aggregates. Post-translationally, intrachain disulfide bonds may be present in the heterodimer. In terms of tissue distribution, expressed by the venom gland.

It is found in the secreted. Its function is as follows. This heterodimer induces potent hemolytic activities (when tested on rabbit erythrocytes, EC(50)=25-56 ng/mL) due to its ability to form pores in the cell membrane. The pore may be composed of 10 alpha/beta heterodimers. The toxin shows cardiovascular effects that include a vasorelaxant action that may involve the L-arginine-nitric oxid synthase pathway. In addition, it displays edema-inducing activities, increases vascular permeability. It also shows myotoxic activities and interferes irreversibly with neuromuscular function. It also induces irreversible platelet aggregation in rabbit or rat (but not in human or mouse) whole blood. In addition, it has been observed to increase spontaneous quantal acetylcholine release from isolated frog cutaneous pectoris motor endings. In Scorpaena plumieri (Spotted scorpionfish), this protein is Cytolytic toxin-beta.